Reading from the N-terminus, the 103-residue chain is Serine protease inhibitor 4 (103 aa).

Cys56 and Cys73 form a disulfide bridge.

This sequence belongs to the protease inhibitor I3 (leguminous Kunitz-type inhibitor) family.

It localises to the vacuole. Inhibitor of serine protease. May protect the plant by inhibiting proteases of invading organisms. The sequence is that of Serine protease inhibitor 4 from Solanum tuberosum (Potato).